Here is a 367-residue protein sequence, read N- to C-terminus: Protein-glutamate methylesterase/protein-glutamine glutaminase 1 (367 aa).

The Response regulatory domain maps to 9–126 (KVLCVDDSAL…RDGMLDYSEK (118 aa)). At Asp-60 the chain carries 4-aspartylphosphate. Residues 168–360 (LVSTEKLIIV…RRIMARLASM (193 aa)) form the CheB-type methylesterase domain. Catalysis depends on residues Ser-180, His-206, and Asp-302.

The protein belongs to the CheB family. Post-translationally, phosphorylated by CheA. Phosphorylation of the N-terminal regulatory domain activates the methylesterase activity.

It localises to the cytoplasm. The catalysed reaction is [protein]-L-glutamate 5-O-methyl ester + H2O = L-glutamyl-[protein] + methanol + H(+). It catalyses the reaction L-glutaminyl-[protein] + H2O = L-glutamyl-[protein] + NH4(+). Its function is as follows. Involved in chemotaxis. Part of a chemotaxis signal transduction system that modulates chemotaxis in response to various stimuli. Catalyzes the demethylation of specific methylglutamate residues introduced into the chemoreceptors (methyl-accepting chemotaxis proteins or MCP) by CheR. Also mediates the irreversible deamidation of specific glutamine residues to glutamic acid. In Burkholderia pseudomallei (strain K96243), this protein is Protein-glutamate methylesterase/protein-glutamine glutaminase 1.